Consider the following 123-residue polypeptide: Large ribosomal subunit protein uL14c (123 aa).

The protein belongs to the universal ribosomal protein uL14 family. As to quaternary structure, part of the 50S ribosomal subunit.

It localises to the plastid. The protein localises to the chloroplast. Its function is as follows. Binds to 23S rRNA. In Lolium perenne (Perennial ryegrass), this protein is Large ribosomal subunit protein uL14c.